Here is a 342-residue protein sequence, read N- to C-terminus: Ribosomal RNA small subunit methyltransferase C (342 aa).

The protein belongs to the methyltransferase superfamily. RsmC family. Monomer.

It is found in the cytoplasm. It catalyses the reaction guanosine(1207) in 16S rRNA + S-adenosyl-L-methionine = N(2)-methylguanosine(1207) in 16S rRNA + S-adenosyl-L-homocysteine + H(+). In terms of biological role, specifically methylates the guanine in position 1207 of 16S rRNA in the 30S particle. This chain is Ribosomal RNA small subunit methyltransferase C, found in Salmonella agona (strain SL483).